The sequence spans 110 residues: Large ribosomal subunit protein uL22 (110 aa).

The protein belongs to the universal ribosomal protein uL22 family. As to quaternary structure, part of the 50S ribosomal subunit.

Its function is as follows. This protein binds specifically to 23S rRNA; its binding is stimulated by other ribosomal proteins, e.g. L4, L17, and L20. It is important during the early stages of 50S assembly. It makes multiple contacts with different domains of the 23S rRNA in the assembled 50S subunit and ribosome. In terms of biological role, the globular domain of the protein is located near the polypeptide exit tunnel on the outside of the subunit, while an extended beta-hairpin is found that lines the wall of the exit tunnel in the center of the 70S ribosome. This chain is Large ribosomal subunit protein uL22, found in Shewanella amazonensis (strain ATCC BAA-1098 / SB2B).